The primary structure comprises 410 residues: Serine proteinase inhibitor A3K (410 aa).

An N-terminal signal peptide occupies residues 1 to 24 (MPSAISRGLLLLAGLCYLVFGIMA). N-linked (GlcNAc...) asparagine glycans are attached at residues N62, N99, N162, N229, and N263. The segment at 360 to 381 (GTEAAAATVLEATRTARPPRLS) is RCL.

It belongs to the serpin family.

The protein resides in the secreted. It is found in the extracellular space. Its function is as follows. Contrapsin inhibits trypsin-like proteases. The chain is Serine proteinase inhibitor A3K (SERPINA3K) from Cavia porcellus (Guinea pig).